A 214-amino-acid polypeptide reads, in one-letter code: Adenylate kinase (214 aa).

Residue 10 to 15 (GAGKGT) coordinates ATP. The tract at residues 30–59 (STGDMLRAAVKAGTELGKQAKEIMDAGKLV) is NMP. AMP contacts are provided by residues Thr31, Arg36, 57-59 (KLV), 85-88 (GFPR), and Gln92. The LID stretch occupies residues 122 to 159 (GRRVHAASGRVYHVKFNPPKVEDKDDVTGEDLSVRKDD). ATP-binding positions include Arg123 and 132–133 (VY). Residues Arg156 and Arg167 each contribute to the AMP site. An ATP-binding site is contributed by Arg200.

The protein belongs to the adenylate kinase family. In terms of assembly, monomer.

It is found in the cytoplasm. It catalyses the reaction AMP + ATP = 2 ADP. The protein operates within purine metabolism; AMP biosynthesis via salvage pathway; AMP from ADP: step 1/1. Its function is as follows. Catalyzes the reversible transfer of the terminal phosphate group between ATP and AMP. Plays an important role in cellular energy homeostasis and in adenine nucleotide metabolism. The polypeptide is Adenylate kinase (Pectobacterium atrosepticum (strain SCRI 1043 / ATCC BAA-672) (Erwinia carotovora subsp. atroseptica)).